We begin with the raw amino-acid sequence, 722 residues long: Transcription factor kayak, isoforms D/sro (722 aa).

A compositionally biased stretch (low complexity) spans 173 to 188 (QHQTQQQHQSQQQQQH). Disordered regions lie at residues 173–193 (QHQT…RQDY), 283–317 (LGQG…HTDS), and 350–407 (GSAS…KRRV). The span at 283–300 (LGQGSESEDSNASYNDTQ) shows a compositional bias: polar residues. Composition is skewed to low complexity over residues 308-317 (TDTSSAHTDS) and 350-364 (GSAS…TSNT). The 64-residue stretch at 385-448 (EQKRAVRRER…NQLEYLLATH (64 aa)) folds into the bZIP domain. The segment at 387 to 406 (KRAVRRERNKQAAARCRKRR) is basic motif. A leucine-zipper region spans residues 413–420 (LTEEVEQL). Residues 477–498 (AGSSGSGASSHHNHNSNDSSNG) show a composition bias toward low complexity. Disordered stretches follow at residues 477–519 (AGSS…PLDL) and 683–722 (DGGT…LVSL). A compositionally biased stretch (polar residues) spans 506 to 516 (TLNSTGRSNSP). Ser-515 bears the Phosphoserine mark.

Belongs to the bZIP family. Fos subfamily. As to quaternary structure, homodimer. Heterodimer with Jra. The kay-Jra heterodimer binds more stably to the AP-1 site than either of the two proteins alone.

It localises to the nucleus. In terms of biological role, developmentally regulated transcription factor AP-1 binds and recognizes the enhancer DNA sequence: 5'-TGA[CG]TCA-3'. May play a role in the function or determination of a particular subset of cells in the developing embryo. It is able to carry out its function either independently of or in conjunction with Jra. The protein is Transcription factor kayak, isoforms D/sro of Drosophila melanogaster (Fruit fly).